The primary structure comprises 88 residues: Small ribosomal subunit protein bS16c (88 aa).

The protein belongs to the bacterial ribosomal protein bS16 family.

It localises to the plastid. The protein resides in the chloroplast. The chain is Small ribosomal subunit protein bS16c from Sinapis alba (White mustard).